The chain runs to 163 residues: Adenosine 5'-monophosphoramidase HINT2 (163 aa).

A mitochondrion-targeting transit peptide spans 1-17; the sequence is MAAAVLLAVGLRAARRT. N6-succinyllysine is present on Lys-45. Positions 55–163 constitute an HIT domain; sequence IFSRILDRSL…GGRQLQWPPG (109 aa). Residues Ser-63 and Asp-80 each contribute to the AMP site. Lys-119 carries the N6-acetyllysine modification. Residue Lys-128 is modified to N6-acetyllysine; alternate. Lys-128 carries the N6-succinyllysine; alternate modification. Asn-136 serves as a coordination point for AMP. Position 139 is an N6-acetyllysine (Lys-139). Residues 142-145 and 149-151 contribute to the AMP site; these read AQSV and HIH. Positions 147–151 match the Histidine triad motif motif; it reads HLHIH. His-149 serves as the catalytic Tele-AMP-histidine intermediate.

It belongs to the HINT family.

The protein localises to the mitochondrion. The catalysed reaction is adenosine 5'-phosphoramidate + H2O = AMP + NH4(+). In terms of biological role, exhibits adenosine 5'-monophosphoramidase activity, hydrolyzing purine nucleotide phosphoramidates with a single phosphate group such as adenosine 5'monophosphoramidate (AMP-NH2) to yield AMP and NH2. Hydrolyzes adenosine 5'-O-p-nitrophenylphosphoramidate (AMP-pNA). May be involved in steroid biosynthesis. May play a role in apoptosis. This chain is Adenosine 5'-monophosphoramidase HINT2, found in Mus musculus (Mouse).